Here is a 243-residue protein sequence, read N- to C-terminus: Small ribosomal subunit protein uS3 (243 aa).

A KH type-2 domain is found at 39–110; that stretch reads IRTFIQKKYG…QVRINVVEVE (72 aa). The segment at 216–243 is disordered; that stretch reads KTIPVGASPKRKAGRRPQQFEDRSNENS. A compositionally biased stretch (basic and acidic residues) spans 233 to 243; it reads QQFEDRSNENS.

It belongs to the universal ribosomal protein uS3 family. Part of the 30S ribosomal subunit. Forms a tight complex with proteins S10 and S14.

Its function is as follows. Binds the lower part of the 30S subunit head. Binds mRNA in the 70S ribosome, positioning it for translation. The sequence is that of Small ribosomal subunit protein uS3 from Prochlorococcus marinus (strain MIT 9312).